The primary structure comprises 371 residues: Protein STRICTOSIDINE SYNTHASE-LIKE 7 (371 aa).

Positions 1 to 25 (MPVLFSSRSLILSIIVPLLISIALY) are cleaved as a signal peptide. Residues N101, N137, and N285 are each glycosylated (N-linked (GlcNAc...) asparagine). A Phosphotyrosine modification is found at Y303.

This sequence belongs to the strictosidine synthase family.

It localises to the vacuole. The protein is Protein STRICTOSIDINE SYNTHASE-LIKE 7 of Arabidopsis thaliana (Mouse-ear cress).